The chain runs to 332 residues: MKLKLVEISSIIRGGANIYVNNKLVATTHNNVTPSFILSLIKSIIGVSAIYGGYFEMPSTATAKLFYKNTPVTSAVLSHTSFTEETISGYEHTRIIFTFSDASRTKYSFDSLQLWTASTHALLSHVSDIALTSPLKKNPQDVVQIDWWIEMESGQPFANILSYLQQQQATYCTSSCTIPSVVPNMVYGYSVFNAFFILLALPNVIQVARDIKTPLTNYLVEGLTLASQVKPQGITSVICYDVCNCQMTTNPQQGTVSEFIGDNYVYVAFNFNNPCPSSEYVVPISTLDLGNGYELQFAVAGVPSNGTGASALLIKIPYGKATLKNLFTHQGE.

The chain crosses the membrane as a helical span at residues 185–205; it reads MVYGYSVFNAFFILLALPNVI.

The protein resides in the host membrane. This is an uncharacterized protein from Sulfolobus islandicus filamentous virus (isolate Iceland/Hveragerdi) (SIFV).